The sequence spans 141 residues: Large ribosomal subunit protein uL11 (141 aa).

Belongs to the universal ribosomal protein uL11 family. In terms of assembly, part of the ribosomal stalk of the 50S ribosomal subunit. Interacts with L10 and the large rRNA to form the base of the stalk. L10 forms an elongated spine to which L12 dimers bind in a sequential fashion forming a multimeric L10(L12)X complex. In terms of processing, one or more lysine residues are methylated.

Its function is as follows. Forms part of the ribosomal stalk which helps the ribosome interact with GTP-bound translation factors. The chain is Large ribosomal subunit protein uL11 from Geobacillus kaustophilus (strain HTA426).